The sequence spans 348 residues: Isopentenyl-diphosphate delta-isomerase (348 aa).

5–6 contacts substrate; the sequence is RK. FMN-binding positions include S61, 62-64, S92, and N120; that span reads SMT. Residue 92–94 coordinates substrate; sequence SMR. Substrate is bound at residue Q159. E160 contributes to the Mg(2+) binding site. FMN contacts are provided by residues K189, S214, T219, 269–271, and 290–291; these read GLR and AR.

It belongs to the IPP isomerase type 2 family. Homooctamer. Dimer of tetramers. FMN serves as cofactor. It depends on NADPH as a cofactor. The cofactor is Mg(2+).

It is found in the cytoplasm. The enzyme catalyses isopentenyl diphosphate = dimethylallyl diphosphate. Involved in the biosynthesis of isoprenoids. Catalyzes the 1,3-allylic rearrangement of the homoallylic substrate isopentenyl (IPP) to its allylic isomer, dimethylallyl diphosphate (DMAPP). This chain is Isopentenyl-diphosphate delta-isomerase, found in Thermoplasma acidophilum (strain ATCC 25905 / DSM 1728 / JCM 9062 / NBRC 15155 / AMRC-C165).